Consider the following 226-residue polypeptide: Uracil-DNA glycosylase (226 aa).

The active-site Proton acceptor is aspartate 65.

This sequence belongs to the uracil-DNA glycosylase (UDG) superfamily. UNG family.

Its subcellular location is the cytoplasm. It carries out the reaction Hydrolyzes single-stranded DNA or mismatched double-stranded DNA and polynucleotides, releasing free uracil.. In terms of biological role, excises uracil residues from the DNA which can arise as a result of misincorporation of dUMP residues by DNA polymerase or due to deamination of cytosine. The protein is Uracil-DNA glycosylase of Bacillus pumilus (strain SAFR-032).